Here is a 338-residue protein sequence, read N- to C-terminus: Glycerol-3-phosphate dehydrogenase [NAD(P)+] (338 aa).

Ser12, Trp13, and Lys110 together coordinate NADPH. Residues Lys110, Gly141, and Ser143 each coordinate sn-glycerol 3-phosphate. Ala145 provides a ligand contact to NADPH. The sn-glycerol 3-phosphate site is built by Lys196, Asp249, Ser259, Arg260, and Asn261. Residue Lys196 is the Proton acceptor of the active site. Arg260 lines the NADPH pocket. Residues Val284 and Glu286 each coordinate NADPH.

This sequence belongs to the NAD-dependent glycerol-3-phosphate dehydrogenase family.

The protein resides in the cytoplasm. The catalysed reaction is sn-glycerol 3-phosphate + NAD(+) = dihydroxyacetone phosphate + NADH + H(+). It catalyses the reaction sn-glycerol 3-phosphate + NADP(+) = dihydroxyacetone phosphate + NADPH + H(+). It functions in the pathway membrane lipid metabolism; glycerophospholipid metabolism. Its function is as follows. Catalyzes the reduction of the glycolytic intermediate dihydroxyacetone phosphate (DHAP) to sn-glycerol 3-phosphate (G3P), the key precursor for phospholipid synthesis. This is Glycerol-3-phosphate dehydrogenase [NAD(P)+] from Pediococcus pentosaceus (strain ATCC 25745 / CCUG 21536 / LMG 10740 / 183-1w).